Reading from the N-terminus, the 572-residue chain is Proline--tRNA ligase (572 aa).

The protein belongs to the class-II aminoacyl-tRNA synthetase family. ProS type 1 subfamily. Homodimer.

The protein resides in the cytoplasm. It catalyses the reaction tRNA(Pro) + L-proline + ATP = L-prolyl-tRNA(Pro) + AMP + diphosphate. In terms of biological role, catalyzes the attachment of proline to tRNA(Pro) in a two-step reaction: proline is first activated by ATP to form Pro-AMP and then transferred to the acceptor end of tRNA(Pro). As ProRS can inadvertently accommodate and process non-cognate amino acids such as alanine and cysteine, to avoid such errors it has two additional distinct editing activities against alanine. One activity is designated as 'pretransfer' editing and involves the tRNA(Pro)-independent hydrolysis of activated Ala-AMP. The other activity is designated 'posttransfer' editing and involves deacylation of mischarged Ala-tRNA(Pro). The misacylated Cys-tRNA(Pro) is not edited by ProRS. The sequence is that of Proline--tRNA ligase from Buchnera aphidicola subsp. Acyrthosiphon pisum (strain APS) (Acyrthosiphon pisum symbiotic bacterium).